Reading from the N-terminus, the 427-residue chain is NADPH-dependent stearoyl-CoA 9-desaturase (427 aa).

Fe cation-binding residues include His90, His94, His125, His129, His130, His304, His308, and His309.

This sequence belongs to the fatty acid desaturase type 1 family. In terms of assembly, interacts with the electron transfer protein Rv3230c to form a functional acyl-CoA desaturase complex. It depends on Fe(2+) as a cofactor. Post-translationally, is rapidly degraded by a mycobacterial protein degradation system that specifically targets the residues LAA at the C-terminus, leading to a post-translational proteolytic regulation of DesA3 essential activity.

It is found in the cell membrane. The enzyme catalyses octadecanoyl-CoA + NADPH + O2 + H(+) = (9Z)-octadecenoyl-CoA + NADP(+) + 2 H2O. Its pathway is lipid metabolism; fatty acid metabolism. Its function is as follows. Is likely involved in the aerobic desaturation system responsible for the synthesis of oleic acid from stearoyl-CoA; oleic acid is a precursor of mycobacterial membrane phospholipids and triglycerides. Catalyzes the conversion of stearoyl-CoA to oleoyl-CoA by introduction of a cis double bond between carbons 9 and 10 of the acyl chain. Requires the electron transfer partner Rv3230c to pass two electrons from NADPH to its active site diiron center. Is also able to catalyze the 9-desaturation of palmitoyl-CoA to palmitoleoyl-CoA. The chain is NADPH-dependent stearoyl-CoA 9-desaturase (desA3) from Mycobacterium tuberculosis (strain CDC 1551 / Oshkosh).